A 147-amino-acid polypeptide reads, in one-letter code: Hemoglobin subunit gamma (147 aa).

Residues 3–147 (NFTAEDKAAI…VASALASRYH (145 aa)) form the Globin domain. His64 and His93 together coordinate heme b.

The protein belongs to the globin family. In terms of assembly, heterotetramer of two alpha chains and two gamma chains in fetal hemoglobin (Hb F). Red blood cells.

Its function is as follows. Gamma chains make up the fetal hemoglobin F, in combination with alpha chains. This Lagothrix lagotricha (Brown woolly monkey) protein is Hemoglobin subunit gamma (HBG).